The chain runs to 393 residues: MAKESYKRDKPHVNIGTIGHVDHGKTTLTAAITSVLAKQGLALQRDFGSIDKAPEERERGITISTAHVEYQTKKRHYAHIDCPGHADYIKNMITGAAQMDGAILVVAGTDGPMPQTREHILLARQVNVPALVVFLNKVDIADPELLELVELELRELLTEYNFPGDDIPIIKGSALKALDGDPEGEKAIMELMDAVDEFIPEPVRDVDKPFLMPVEDVFSISGRGTVGTGRIERGRIKINEEVEIVGIKPTRKSVVTGIEMFQKLLDEGQAGDNAGLLLRGVDKTELERGMVIAKPGSIKPHTKFKAEVYILRKEEGGRHTPFFNGYRPQFYFRTTDVTGSVTLPEGVEMVMPGDNLSVEVELIVPIAMDEGLRFAIREGGRTVGAGSVTKIIE.

One can recognise a tr-type G domain in the interval 10–203; it reads KPHVNIGTIG…AVDEFIPEPV (194 aa). The tract at residues 19–26 is G1; that stretch reads GHVDHGKT. A GTP-binding site is contributed by 19–26; it reads GHVDHGKT. Mg(2+) is bound at residue threonine 26. The segment at 60–64 is G2; that stretch reads GITIS. Residues 81–84 are G3; the sequence is DCPG. Residues 81–85 and 136–139 each bind GTP; these read DCPGH and NKVD. The segment at 136–139 is G4; sequence NKVD. A G5 region spans residues 173–175; that stretch reads SAL.

This sequence belongs to the TRAFAC class translation factor GTPase superfamily. Classic translation factor GTPase family. EF-Tu/EF-1A subfamily. As to quaternary structure, monomer.

The protein resides in the cytoplasm. It catalyses the reaction GTP + H2O = GDP + phosphate + H(+). Its function is as follows. GTP hydrolase that promotes the GTP-dependent binding of aminoacyl-tRNA to the A-site of ribosomes during protein biosynthesis. In Chlorobium limicola (strain DSM 245 / NBRC 103803 / 6330), this protein is Elongation factor Tu.